Reading from the N-terminus, the 82-residue chain is UPF0180 protein BAA_1480 (82 aa).

The protein belongs to the UPF0180 family.

This chain is UPF0180 protein BAA_1480, found in Bacillus anthracis (strain A0248).